Reading from the N-terminus, the 190-residue chain is Endoribonuclease YbeY (190 aa).

His147, His151, and His157 together coordinate Zn(2+).

Belongs to the endoribonuclease YbeY family. It depends on Zn(2+) as a cofactor.

The protein localises to the cytoplasm. In terms of biological role, single strand-specific metallo-endoribonuclease involved in late-stage 70S ribosome quality control and in maturation of the 3' terminus of the 16S rRNA. The protein is Endoribonuclease YbeY of Nitrobacter winogradskyi (strain ATCC 25391 / DSM 10237 / CIP 104748 / NCIMB 11846 / Nb-255).